A 513-amino-acid polypeptide reads, in one-letter code: ATP synthase subunit alpha (513 aa).

169 to 176 serves as a coordination point for ATP; that stretch reads GDRQIGKT.

Belongs to the ATPase alpha/beta chains family. As to quaternary structure, F-type ATPases have 2 components, CF(1) - the catalytic core - and CF(0) - the membrane proton channel. CF(1) has five subunits: alpha(3), beta(3), gamma(1), delta(1), epsilon(1). CF(0) has three main subunits: a(1), b(2) and c(9-12). The alpha and beta chains form an alternating ring which encloses part of the gamma chain. CF(1) is attached to CF(0) by a central stalk formed by the gamma and epsilon chains, while a peripheral stalk is formed by the delta and b chains.

The protein localises to the cell inner membrane. It catalyses the reaction ATP + H2O + 4 H(+)(in) = ADP + phosphate + 5 H(+)(out). Functionally, produces ATP from ADP in the presence of a proton gradient across the membrane. The alpha chain is a regulatory subunit. The chain is ATP synthase subunit alpha from Shewanella sediminis (strain HAW-EB3).